The primary structure comprises 205 residues: Ribosomal RNA small subunit methyltransferase G (205 aa).

S-adenosyl-L-methionine-binding positions include Gly70, Leu75, 124–125 (IE), and Arg138.

The protein belongs to the methyltransferase superfamily. RNA methyltransferase RsmG family.

It is found in the cytoplasm. The catalysed reaction is guanosine(527) in 16S rRNA + S-adenosyl-L-methionine = N(7)-methylguanosine(527) in 16S rRNA + S-adenosyl-L-homocysteine. In terms of biological role, specifically methylates the N7 position of guanine in position 527 of 16S rRNA. The chain is Ribosomal RNA small subunit methyltransferase G from Ruegeria sp. (strain TM1040) (Silicibacter sp.).